Consider the following 190-residue polypeptide: Elongation factor P-like protein (190 aa).

This sequence belongs to the elongation factor P family.

This chain is Elongation factor P-like protein, found in Shigella boydii serotype 4 (strain Sb227).